The chain runs to 135 residues: Large ribosomal subunit protein uL16c (135 aa).

Residues 1-17 (MLSPKRTKFRKQHRNRM) are compositionally biased toward basic residues. Positions 1 to 22 (MLSPKRTKFRKQHRNRMNGKAS) are disordered.

Belongs to the universal ribosomal protein uL16 family. As to quaternary structure, part of the 50S ribosomal subunit.

It is found in the plastid. The protein resides in the chloroplast. This Gracilaria tenuistipitata (Red alga) protein is Large ribosomal subunit protein uL16c.